The primary structure comprises 245 residues: Probable phosphatase Spro_1934 (245 aa).

Residues histidine 7, histidine 9, histidine 15, histidine 40, glutamate 73, histidine 101, histidine 131, aspartate 192, and histidine 194 each coordinate Zn(2+).

It belongs to the PHP family. Homotrimer. It depends on Zn(2+) as a cofactor.

This chain is Probable phosphatase Spro_1934, found in Serratia proteamaculans (strain 568).